A 220-amino-acid chain; its full sequence is ATP-dependent Clp protease proteolytic subunit (220 aa).

Ser-125 serves as the catalytic Nucleophile. Residue His-150 is part of the active site.

This sequence belongs to the peptidase S14 family. Fourteen ClpP subunits assemble into 2 heptameric rings which stack back to back to give a disk-like structure with a central cavity, resembling the structure of eukaryotic proteasomes.

It localises to the cytoplasm. The enzyme catalyses Hydrolysis of proteins to small peptides in the presence of ATP and magnesium. alpha-casein is the usual test substrate. In the absence of ATP, only oligopeptides shorter than five residues are hydrolyzed (such as succinyl-Leu-Tyr-|-NHMec, and Leu-Tyr-Leu-|-Tyr-Trp, in which cleavage of the -Tyr-|-Leu- and -Tyr-|-Trp bonds also occurs).. Functionally, cleaves peptides in various proteins in a process that requires ATP hydrolysis. Has a chymotrypsin-like activity. Plays a major role in the degradation of misfolded proteins. The protein is ATP-dependent Clp protease proteolytic subunit of Bacteroides thetaiotaomicron (strain ATCC 29148 / DSM 2079 / JCM 5827 / CCUG 10774 / NCTC 10582 / VPI-5482 / E50).